We begin with the raw amino-acid sequence, 249 residues long: Green-light absorbing proteorhodopsin (249 aa).

The first 17 residues, 1 to 17, serve as a signal peptide directing secretion; it reads MKLLLILGSVIALPTFA. 7 consecutive transmembrane segments (helical) span residues 30 to 49, 62 to 84, 99 to 121, 128 to 147, 151 to 168, 189 to 211, and 221 to 243; these read GVSF…FFFV, LTVS…GVWI, LLTV…NVAG, LVGS…GIMA, AFII…ELWA, MMYI…YLMG, and LIYN…NVAV. The residue at position 231 (Lys231) is an N6-(retinylidene)lysine.

This sequence belongs to the archaeal/bacterial/fungal opsin family. In terms of processing, contains one covalently linked retinal chromophore.

Its subcellular location is the cell membrane. In terms of biological role, light-driven proton pump that generates photothrophic energy. In Gamma-proteobacterium EBAC31A08, this protein is Green-light absorbing proteorhodopsin.